We begin with the raw amino-acid sequence, 286 residues long: Bifunctional protein FolD (286 aa).

Residues Gly168–Gly170, Thr195, and Val236 each bind NADP(+).

It belongs to the tetrahydrofolate dehydrogenase/cyclohydrolase family. In terms of assembly, homodimer.

It carries out the reaction (6R)-5,10-methylene-5,6,7,8-tetrahydrofolate + NADP(+) = (6R)-5,10-methenyltetrahydrofolate + NADPH. The catalysed reaction is (6R)-5,10-methenyltetrahydrofolate + H2O = (6R)-10-formyltetrahydrofolate + H(+). Its pathway is one-carbon metabolism; tetrahydrofolate interconversion. Functionally, catalyzes the oxidation of 5,10-methylenetetrahydrofolate to 5,10-methenyltetrahydrofolate and then the hydrolysis of 5,10-methenyltetrahydrofolate to 10-formyltetrahydrofolate. The protein is Bifunctional protein FolD of Mycolicibacterium gilvum (strain PYR-GCK) (Mycobacterium gilvum (strain PYR-GCK)).